The following is a 1274-amino-acid chain: Vacuolar protein sorting-associated protein 8 (1274 aa).

Position 1 is an N-acetylmethionine (Met1). WD repeat units follow at residues 75–119 (THVY…QTIL), 131–170 (SIRSPVKSIVICSDGTHVAASYETGNICIWNLNVGYRVKP), and 193–233 (HVNK…FWQL). 2 CHCR repeats span residues 507–665 (LQQS…YPQN) and 915–1092 (FDLL…KYPS). The segment at 1198–1266 (CEICGKKIWG…PDEYSCLICQ (69 aa)) adopts an RING-type; atypical zinc-finger fold.

It belongs to the VPS8 family.

Its subcellular location is the golgi apparatus. It localises to the golgi stack. Required for localization and recycling of the CPY sorting receptor (VPS10) to the late-Golgi compartment. Involved in the retention of proteins to the late-Golgi. Plays an integral role in the complex vacuolar protein sorting process. The polypeptide is Vacuolar protein sorting-associated protein 8 (VPS8) (Saccharomyces cerevisiae (strain ATCC 204508 / S288c) (Baker's yeast)).